A 597-amino-acid chain; its full sequence is Probable potassium transport system protein Kup 1 (597 aa).

10 helical membrane-spanning segments follow: residues 23-43 (GAWL…DSVL), 72-92 (LTMM…SRGT), 98-118 (VFGS…VVAI), 143-163 (ATGL…EALY), 174-194 (IYFT…GQGA), 226-246 (AVVL…TGAF), 273-293 (LYIP…LLLF), 303-323 (YGLA…IYLW), 329-349 (FGAV…FAAS), and 353-373 (FLHG…IMYT).

Belongs to the HAK/KUP transporter (TC 2.A.72) family.

The protein localises to the cell membrane. The enzyme catalyses K(+)(in) + H(+)(in) = K(+)(out) + H(+)(out). Its function is as follows. Transport of potassium into the cell. Likely operates as a K(+):H(+) symporter. The protein is Probable potassium transport system protein Kup 1 (kup1) of Bifidobacterium longum (strain NCC 2705).